The following is a 265-amino-acid chain: Probable DNA replication complex GINS protein PSF3 (265 aa).

The disordered stretch occupies residues 180-265; the sequence is ISTSSNNKNN…KKRKRMFDDE (86 aa). Residues 183–246 are compositionally biased toward low complexity; that stretch reads SSNNKNNSSN…NNNNNSQNSS (64 aa). A compositionally biased stretch (basic residues) spans 255 to 265; sequence VKKRKRMFDDE.

It belongs to the GINS3/PSF3 family. Component of the GINS complex which is a heterotetramer of gins1, gins2, gins3 and gins4.

The protein localises to the nucleus. The GINS complex plays an essential role in the initiation of DNA replication. The protein is Probable DNA replication complex GINS protein PSF3 (gins3) of Dictyostelium discoideum (Social amoeba).